Here is a 1113-residue protein sequence, read N- to C-terminus: Centrosomal protein of 131 kDa (1113 aa).

Disordered stretches follow at residues 78 to 97 and 232 to 267; these read RRSN…LSSE and KSQK…TEEE. Over residues 79–97 the composition is skewed to polar residues; it reads RSNSTTQVNQQANTSLSSE. The segment covering 238–257 has biased composition (low complexity); the sequence is SSASSSSNNNAPRSPRSPGQ. Positions 259-371 form a coiled coil; it reads RRREVTEEEA…QQIAEQETEA (113 aa). The 21-residue stretch at 276-296 folds into the IQ domain; that stretch reads NHAAIIIQRWYRRHVNSKRAN. Disordered regions lie at residues 306-331, 368-401, and 438-458; these read SKKK…EDDR, ETEA…NTDS, and SVSM…SKTT. Residues 307–331 are compositionally biased toward basic and acidic residues; sequence KKKEREQRAEEAKTTESLKKKEDDR. Over residues 374 to 384 the composition is skewed to basic residues; that stretch reads HPGKVGRKKLT. The segment covering 446-458 has biased composition (low complexity); that stretch reads QGASSSRAQSKTT. Residues 580–1111 adopt a coiled-coil conformation; the sequence is SMMRLRLELD…LLEQQRKQLL (532 aa).

It belongs to the CEP131 family.

It is found in the chromosome. The protein localises to the centromere. The protein resides in the cytoplasm. Its subcellular location is the cytoskeleton. It localises to the microtubule organizing center. It is found in the centrosome. The protein localises to the centriolar satellite. The protein resides in the cilium basal body. Its subcellular location is the cytoplasmic vesicle. It localises to the secretory vesicle. It is found in the acrosome. Cilium-specific protein required for the regulation of cilium/flagellum formation. Involved in centriole duplication. May play a role in melanosome trafficking. The chain is Centrosomal protein of 131 kDa (cep131) from Danio rerio (Zebrafish).